The sequence spans 425 residues: DNA replication and repair protein RecF (425 aa).

Residue 30–37 (GPNGHGKT) coordinates ATP.

This sequence belongs to the RecF family.

Its subcellular location is the cytoplasm. In terms of biological role, the RecF protein is involved in DNA metabolism; it is required for DNA replication and normal SOS inducibility. RecF binds preferentially to single-stranded, linear DNA. It also seems to bind ATP. This is DNA replication and repair protein RecF from Corynebacterium jeikeium (strain K411).